The chain runs to 272 residues: Shikimate dehydrogenase (NADP(+)) (272 aa).

Shikimate-binding positions include 14-16 (SLS) and Thr61. Lys65 functions as the Proton acceptor in the catalytic mechanism. Asp102 serves as a coordination point for shikimate. NADP(+) contacts are provided by residues 127 to 131 (GAGGA), 151 to 156 (NRTPSK), and Leu215. Tyr217 contributes to the shikimate binding site. Gly239 contacts NADP(+).

This sequence belongs to the shikimate dehydrogenase family. As to quaternary structure, homodimer.

It catalyses the reaction shikimate + NADP(+) = 3-dehydroshikimate + NADPH + H(+). It participates in metabolic intermediate biosynthesis; chorismate biosynthesis; chorismate from D-erythrose 4-phosphate and phosphoenolpyruvate: step 4/7. Involved in the biosynthesis of the chorismate, which leads to the biosynthesis of aromatic amino acids. Catalyzes the reversible NADPH linked reduction of 3-dehydroshikimate (DHSA) to yield shikimate (SA). The protein is Shikimate dehydrogenase (NADP(+)) of Coxiella burnetii (strain CbuG_Q212) (Coxiella burnetii (strain Q212)).